The primary structure comprises 38 residues: MKVQASVKKICRNCKVIRRKGRVMVICSAEPRHKQRQG.

This sequence belongs to the bacterial ribosomal protein bL36 family.

The chain is Large ribosomal subunit protein bL36 from Alcanivorax borkumensis (strain ATCC 700651 / DSM 11573 / NCIMB 13689 / SK2).